Reading from the N-terminus, the 188-residue chain is Elongation factor P (188 aa).

Belongs to the elongation factor P family.

Its subcellular location is the cytoplasm. The protein operates within protein biosynthesis; polypeptide chain elongation. Functionally, involved in peptide bond synthesis. Stimulates efficient translation and peptide-bond synthesis on native or reconstituted 70S ribosomes in vitro. Probably functions indirectly by altering the affinity of the ribosome for aminoacyl-tRNA, thus increasing their reactivity as acceptors for peptidyl transferase. The protein is Elongation factor P of Exiguobacterium sibiricum (strain DSM 17290 / CCUG 55495 / CIP 109462 / JCM 13490 / 255-15).